The primary structure comprises 152 residues: Antiholin-like protein LrgA (152 aa).

4 helical membrane passes run 23–43 (YSIF…KIIE), 45–65 (FMPI…IALC), 77–97 (VGTA…ISVI), and 108–128 (ILII…TGFA).

Belongs to the CidA/LrgA family. LrgA subfamily.

The protein localises to the cell membrane. Functionally, inhibits the expression or activity of extracellular murein hydrolases by interacting, possibly with LrgB, with the holin-like proteins CidA and/or CidB. The LrgAB and CidAB proteins may affect the proton motive force of the membrane. May be involved in programmed cell death (PCD), possibly triggering PCD in response to antibiotics and environmental stresses. The chain is Antiholin-like protein LrgA from Staphylococcus epidermidis (strain ATCC 35984 / DSM 28319 / BCRC 17069 / CCUG 31568 / BM 3577 / RP62A).